The chain runs to 636 residues: Putative ankyrin repeat protein L766 (636 aa).

11 ANK repeats span residues Asn63 to Leu97, Ser99 to Ser129, Phe130 to Cys159, Tyr161 to Asn190, Phe230 to Phe259, Thr261 to Asp284, Ser322 to Ile355, Asn372 to Asp400, Asp425 to Ile455, Asn517 to Asn546, and Leu548 to Gln575.

The protein is Putative ankyrin repeat protein L766 of Acanthamoeba polyphaga mimivirus (APMV).